A 585-amino-acid chain; its full sequence is Pyruvate kinase (585 aa).

Residue Arg32 participates in substrate binding. Asn34, Ser36, Asp66, and Thr67 together coordinate K(+). Residue 34 to 37 (NFSH) coordinates ATP. Positions 73 and 156 each coordinate ATP. Glu221 lines the Mg(2+) pocket. 3 residues coordinate substrate: Gly244, Asp245, and Thr277. Asp245 serves as a coordination point for Mg(2+).

This sequence belongs to the pyruvate kinase family. In the C-terminal section; belongs to the PEP-utilizing enzyme family. Mg(2+) serves as cofactor. It depends on K(+) as a cofactor.

It carries out the reaction pyruvate + ATP = phosphoenolpyruvate + ADP + H(+). It participates in carbohydrate degradation; glycolysis; pyruvate from D-glyceraldehyde 3-phosphate: step 5/5. This chain is Pyruvate kinase (pyk), found in Staphylococcus epidermidis (strain ATCC 35984 / DSM 28319 / BCRC 17069 / CCUG 31568 / BM 3577 / RP62A).